The chain runs to 3133 residues: Probable polyketide synthase 38 (3133 aa).

The Ketosynthase family 3 (KS3) domain maps to 9-440; sequence DDDVAVIGIG…GSNVCLILSE (432 aa). Active-site for beta-ketoacyl synthase activity residues include Cys181, His320, and His363. The interval 647 to 680 is acyl/malonyl transferase; the sequence is GVSADIIIGHSLGEISSAYCSGMIDFQTLCYLTY. The active-site For acyl/malonyl transferase activity is the Ser657. Positions 945-1067 are N-terminal hotdog fold; that stretch reads GPSIHSLGNN…GNFSLSKHNI (123 aa). Residues 945–1248 enclose the PKS/mFAS DH domain; that stretch reads GPSIHSLGNN…CTIVASNPDS (304 aa). His979 serves as the catalytic Proton acceptor; for dehydratase activity. The tract at residues 1083–1248 is C-terminal hotdog fold; that stretch reads NFTCISKQDL…CTIVASNPDS (166 aa). Asp1155 acts as the Proton donor; for dehydratase activity in catalysis. Residues 1370–1408 are disordered; that stretch reads NNNNNNNNNNNNNNNNNNNNNNNNNNNNNNNNNDNDNDN. The region spanning 2562–2639 is the Carrier domain; it reads NNNEIIRSTI…QSIEIIKSAH (78 aa). Ser2599 is modified (O-(pantetheine 4'-phosphoryl)serine). A coiled-coil region spans residues 2649–2711; sequence NNNNSNHHDN…NNNNNNNNNN (63 aa). 2 disordered regions span residues 2691 to 2715 and 2794 to 2817; these read LNNN…NNNN and GNIS…NNNQ. Composition is skewed to low complexity over residues 2692-2715 and 2795-2817; these read NNNN…NNNN and NISN…NNNQ.

Pantetheine 4'-phosphate is required as a cofactor.

Its function is as follows. Probable polyketide synthase. The sequence is that of Probable polyketide synthase 38 (pks38) from Dictyostelium discoideum (Social amoeba).